A 360-amino-acid chain; its full sequence is tRNA pseudouridine synthase D (360 aa).

Asp-76 serves as the catalytic Nucleophile. The 182-residue stretch at 151 to 332 (GMPNFFGYQR…HGIYKEKNAW (182 aa)) folds into the TRUD domain.

The protein belongs to the pseudouridine synthase TruD family.

It carries out the reaction uridine(13) in tRNA = pseudouridine(13) in tRNA. In terms of biological role, responsible for synthesis of pseudouridine from uracil-13 in transfer RNAs. In Nitratiruptor sp. (strain SB155-2), this protein is tRNA pseudouridine synthase D.